A 333-amino-acid polypeptide reads, in one-letter code: tRNA-dihydrouridine(16) synthase (333 aa).

FMN contacts are provided by residues 19–21 and Gln-80; that span reads PMQ. Cys-110 serves as the catalytic Proton donor. Residues Lys-151, 211 to 213, and 235 to 236 each bind FMN; these read NGD and GR.

Belongs to the Dus family. DusC subfamily. FMN serves as cofactor.

It carries out the reaction 5,6-dihydrouridine(16) in tRNA + NADP(+) = uridine(16) in tRNA + NADPH + H(+). The enzyme catalyses 5,6-dihydrouridine(16) in tRNA + NAD(+) = uridine(16) in tRNA + NADH + H(+). In terms of biological role, catalyzes the synthesis of 5,6-dihydrouridine (D), a modified base found in the D-loop of most tRNAs, via the reduction of the C5-C6 double bond in target uridines. Specifically modifies U16 in tRNAs. This Neisseria meningitidis serogroup A / serotype 4A (strain DSM 15465 / Z2491) protein is tRNA-dihydrouridine(16) synthase.